The chain runs to 622 residues: Mitochondrial distribution and morphology protein 34 (622 aa).

One can recognise an SMP-LTD domain in the interval Met-1–Leu-195. 6 disordered regions span residues Gln-211–Asp-234, Pro-303–Ala-322, Ser-355–Pro-432, Glu-445–Arg-464, Ser-482–Leu-546, and Lys-581–His-622. The segment covering Asn-214 to Leu-225 has biased composition (low complexity). Residues Arg-360–Arg-372 are compositionally biased toward basic residues. Basic and acidic residues predominate over residues Val-373–Asp-384. Positions Ser-388–Val-404 are enriched in low complexity. Polar residues-rich tracts occupy residues Ser-482–Leu-495 and Asn-522–Ser-532. 2 stretches are compositionally biased toward low complexity: residues Gln-533–Gln-543 and Asn-592–Asn-601.

The protein belongs to the MDM34 family. Component of the ER-mitochondria encounter structure (ERMES) or MDM complex, composed of MMM1, MDM10, MDM12 and MDM34.

The protein resides in the mitochondrion outer membrane. Its function is as follows. Component of the ERMES/MDM complex, which serves as a molecular tether to connect the endoplasmic reticulum (ER) and mitochondria. Components of this complex are involved in the control of mitochondrial shape and protein biogenesis, and function in nonvesicular lipid trafficking between the ER and mitochondria. MDM34 is required for the interaction of the ER-resident membrane protein MMM1 and the outer mitochondrial membrane-resident beta-barrel protein MDM10. The polypeptide is Mitochondrial distribution and morphology protein 34 (Ajellomyces capsulatus (strain G186AR / H82 / ATCC MYA-2454 / RMSCC 2432) (Darling's disease fungus)).